A 336-amino-acid chain; its full sequence is Aspartate--ammonia ligase (336 aa).

The protein belongs to the class-II aminoacyl-tRNA synthetase family. AsnA subfamily.

It localises to the cytoplasm. The enzyme catalyses L-aspartate + NH4(+) + ATP = L-asparagine + AMP + diphosphate + H(+). It functions in the pathway amino-acid biosynthesis; L-asparagine biosynthesis; L-asparagine from L-aspartate (ammonia route): step 1/1. The protein is Aspartate--ammonia ligase of Lactobacillus acidophilus (strain ATCC 700396 / NCK56 / N2 / NCFM).